Reading from the N-terminus, the 265-residue chain is Transcription factor BHLH089 (265 aa).

Residues 1 to 132 (MDPAPTLAAE…PPPPEPPKQD (132 aa)) form a disordered region. Composition is skewed to gly residues over residues 17 to 29 (LGGGGGGGGGGRG) and 44 to 53 (SRGGGGGGGA). The span at 95-105 (SKSSGDNSSLR) shows a compositional bias: polar residues. The segment at 142-155 (QATDSHSLAERARR) is basic motif; degenerate. The bHLH domain maps to 142–192 (QATDSHSLAERARREKISERMKILQDLVPGCNKVIGKASVLDEIINYIQAL). Positions 156-192 (EKISERMKILQDLVPGCNKVIGKASVLDEIINYIQAL) are helix-loop-helix motif.

This sequence belongs to the bHLH protein family. In terms of assembly, interacts with RSS3.

The protein localises to the nucleus. Its function is as follows. Transcription factor that may regulate jasmonate-regulated genes. This chain is Transcription factor BHLH089, found in Oryza sativa subsp. japonica (Rice).